The following is a 396-amino-acid chain: NADH-quinone oxidoreductase subunit D (396 aa).

It belongs to the complex I 49 kDa subunit family. NDH-1 is composed of 14 different subunits. Subunits NuoB, C, D, E, F, and G constitute the peripheral sector of the complex.

It localises to the cell inner membrane. It carries out the reaction a quinone + NADH + 5 H(+)(in) = a quinol + NAD(+) + 4 H(+)(out). NDH-1 shuttles electrons from NADH, via FMN and iron-sulfur (Fe-S) centers, to quinones in the respiratory chain. The immediate electron acceptor for the enzyme in this species is believed to be ubiquinone. Couples the redox reaction to proton translocation (for every two electrons transferred, four hydrogen ions are translocated across the cytoplasmic membrane), and thus conserves the redox energy in a proton gradient. This Methylorubrum populi (strain ATCC BAA-705 / NCIMB 13946 / BJ001) (Methylobacterium populi) protein is NADH-quinone oxidoreductase subunit D.